We begin with the raw amino-acid sequence, 348 residues long: Calcium/calmodulin-dependent protein kinase type 1 (348 aa).

The Nuclear localization signal 1 motif lies at 7–22 (RDGSGPAPNATIREKY). A Protein kinase domain is found at 22-278 (YDFRDVLGTG…CQDALSHPWI (257 aa)). ATP contacts are provided by residues 28–36 (LGTGAFSKV) and K52. The Nuclear localization signal 2 motif lies at 71–78 (KVLRKLRH). D144 functions as the Proton acceptor in the catalytic mechanism. The residue at position 179 (T179) is a Phosphothreonine; by ckk-1. An autoinhibitory domain region spans residues 278 to 318 (ISGNTAYTHDIHGTVAVHLKKSLAKRNWKKAYNAAAAIRQL). A Nuclear export sequence motif is present at residues 288–294 (IHGTVAV). Positions 297–307 (KKSLAKRNWKK) match the Nuclear localization signal 3 motif. Residues 298–319 (KSLAKRNWKKAYNAAAAIRQLQ) form a calmodulin-binding region. Positions 327–338 (SNRLQKQASQQQ) are enriched in polar residues. The disordered stretch occupies residues 327-348 (SNRLQKQASQQQPEPPTPAFHA). Residues 339-348 (PEPPTPAFHA) show a composition bias toward pro residues.

The protein belongs to the protein kinase superfamily. CAMK Ser/Thr protein kinase family. CaMK subfamily. As to quaternary structure, interacts with importin ima-3; affinity for ima-3 is increased in the presence of Ca(2+) and calmodulin and leads to increased nuclear accumulation of cmk-1 in FLP neurons upon prolonged heat activation. Mg(2+) serves as cofactor. In terms of processing, phosphorylation at Thr-179 can promote both nuclear export and import, sustaining nucleocytoplasmic shuttling. Expressed in head and tail neurons and vulval muscles. Throughout the nervous system. Detected in neurites and neuronal cell bodies. Expressed in the mechanosensory neurons, AVM and ALM, and in the interneurons, AVA, AVB and AVD. Expressed in the right and left ASE neurons where it functions cell-autonomously to control salt-avoidance learning. Expressed in FLP and AFD thermosensory neurons.

The protein localises to the nucleus. The protein resides in the cytoplasm. The catalysed reaction is L-seryl-[protein] + ATP = O-phospho-L-seryl-[protein] + ADP + H(+). The enzyme catalyses L-threonyl-[protein] + ATP = O-phospho-L-threonyl-[protein] + ADP + H(+). With respect to regulation, activated by Ca(2+)/calmodulin. Binding of calmodulin results in a conformational change that generates functional binding sites for both substrate and ATP, and thus relieves autoinhibition and lowers the Km of substrate binding. Must be phosphorylated by ckk-1 to be maximally active but this does not appear to be required for activity in AFD neurons. Calcium/calmodulin-dependent protein kinase that operates in the calcium-triggered CaMKK-CaMK1 signaling cascade which results in transcriptional activation. Transcriptional activation occurs at least in part through phosphorylation of crh-1. Regulates gene expression, sensory morphology, and function of the AFD thermosensory neurons. Involved in long-term adaptation of AFD neurons to temperatures warmer than the initial acclimatized cultivation temperature. Acts in the FLP thermal nociceptors to moderate the responsiveness to noxious heat and controls neuropeptide release from FLP neurons in response to temperature elevations. Regulates the dauer decision, the decision of the larvae to enter into the alternative stress-resistant and long-lived dauer developmental stage, based on the feeding state, primarily in the AWC sensory neurons. Acts non cell-autonomously in the AWC neurons to regulate expression of the daf-28 insulin-like peptide and cell-autonomously in the ASI sensory neurons to regulate expression of the growth promoting daf-7 in a food-regulated manner. Plays a role in memory-based thermal response of an individual AFD neuron cell. Influences habituation and sensitivity to repeated mechanosensory stimuli. Involved in chemotaxis response in AWC neurons to attractant 2-heptanone, a volatile organic compound emitted by the nematode pathogenic bacterium B.nematocida B16. Acts in the ASE salt-sensing neurons to promote a type of aversive gustatory-associated learning called salt-avoidance learning via regulation of crh-1 signaling and the promotion of long-term memory formation, but is not involved in salt attraction. Represses transcription of glutamate receptor glr-1 in the nucleus basally and in response to changes in synaptic activity. This Caenorhabditis elegans protein is Calcium/calmodulin-dependent protein kinase type 1.